The following is a 536-amino-acid chain: Light-independent protochlorophyllide reductase subunit B (536 aa).

Asp36 contacts [4Fe-4S] cluster. Asp292 serves as the catalytic Proton donor. A substrate-binding site is contributed by 427–428; sequence GL. The span at 448 to 469 shows a compositional bias: low complexity; the sequence is SHLGHLGGHQSQTEQQQSQAAT. Residues 448-489 form a disordered region; sequence SHLGHLGGHQSQTEQQQSQAATNPSTQSNADSSSEESPLWTP. Over residues 470–483 the composition is skewed to polar residues; that stretch reads NPSTQSNADSSSEE.

The protein belongs to the ChlB/BchB/BchZ family. Protochlorophyllide reductase is composed of three subunits; ChlL, ChlN and ChlB. Forms a heterotetramer of two ChlB and two ChlN subunits. The cofactor is [4Fe-4S] cluster.

It catalyses the reaction chlorophyllide a + oxidized 2[4Fe-4S]-[ferredoxin] + 2 ADP + 2 phosphate = protochlorophyllide a + reduced 2[4Fe-4S]-[ferredoxin] + 2 ATP + 2 H2O. It functions in the pathway porphyrin-containing compound metabolism; chlorophyll biosynthesis (light-independent). In terms of biological role, component of the dark-operative protochlorophyllide reductase (DPOR) that uses Mg-ATP and reduced ferredoxin to reduce ring D of protochlorophyllide (Pchlide) to form chlorophyllide a (Chlide). This reaction is light-independent. The NB-protein (ChlN-ChlB) is the catalytic component of the complex. In Prochlorococcus marinus (strain MIT 9313), this protein is Light-independent protochlorophyllide reductase subunit B.